The chain runs to 231 residues: 2-C-methyl-D-erythritol 4-phosphate cytidylyltransferase (231 aa).

Belongs to the IspD/TarI cytidylyltransferase family. IspD subfamily. Homodimer.

The catalysed reaction is 2-C-methyl-D-erythritol 4-phosphate + CTP + H(+) = 4-CDP-2-C-methyl-D-erythritol + diphosphate. It functions in the pathway isoprenoid biosynthesis; isopentenyl diphosphate biosynthesis via DXP pathway; isopentenyl diphosphate from 1-deoxy-D-xylulose 5-phosphate: step 2/6. Its function is as follows. Catalyzes the formation of 4-diphosphocytidyl-2-C-methyl-D-erythritol from CTP and 2-C-methyl-D-erythritol 4-phosphate (MEP). The chain is 2-C-methyl-D-erythritol 4-phosphate cytidylyltransferase from Citrobacter koseri (strain ATCC BAA-895 / CDC 4225-83 / SGSC4696).